The sequence spans 211 residues: Tudor-interacting repair regulator protein (211 aa).

Residues Lys10 and Lys151 each participate in a glycyl lysine isopeptide (Lys-Gly) (interchain with G-Cter in ubiquitin) cross-link. The interval 118–205 (TLEQLHAVEI…TEKQKKALEK (88 aa)) is interaction with PXN.

Belongs to the Nudix hydrolase family. TIRR subfamily. In terms of assembly, homodimer. Interacts with TP53BP1 (via the Tudor-like domain); interaction is abolished following DNA damage and TP53BP1 phosphorylation by ATM. Interacts (via the cytoplasmic part) with SDC4. Interacts with TGFB1I1 and PXN.

Its subcellular location is the nucleus. Functionally, key regulator of TP53BP1 required to stabilize TP53BP1 and regulate its recruitment to chromatin. In absence of DNA damage, interacts with the tandem Tudor-like domain of TP53BP1, masking the region that binds histone H4 dimethylated at 'Lys-20' (H4K20me2), thereby preventing TP53BP1 recruitment to chromatin and maintaining TP53BP1 localization to the nucleus. Following DNA damage, ATM-induced phosphorylation of TP53BP1 and subsequent recruitment of RIF1 leads to dissociate NUDT16L1/TIRR from TP53BP1, unmasking the tandem Tudor-like domain and allowing recruitment of TP53BP1 to DNA double strand breaks (DSBs). Binds U8 snoRNA. In Homo sapiens (Human), this protein is Tudor-interacting repair regulator protein.